A 314-amino-acid chain; its full sequence is Methionyl-tRNA formyltransferase (314 aa).

112 to 115 (SLLP) is a (6S)-5,6,7,8-tetrahydrofolate binding site.

This sequence belongs to the Fmt family.

The enzyme catalyses L-methionyl-tRNA(fMet) + (6R)-10-formyltetrahydrofolate = N-formyl-L-methionyl-tRNA(fMet) + (6S)-5,6,7,8-tetrahydrofolate + H(+). Its function is as follows. Attaches a formyl group to the free amino group of methionyl-tRNA(fMet). The formyl group appears to play a dual role in the initiator identity of N-formylmethionyl-tRNA by promoting its recognition by IF2 and preventing the misappropriation of this tRNA by the elongation apparatus. In Aeromonas salmonicida (strain A449), this protein is Methionyl-tRNA formyltransferase.